Reading from the N-terminus, the 148-residue chain is Protein E6 (148 aa).

Zinc fingers lie at residues 29–65 (CVFC…CARC) and 102–138 (CYTC…CAYC).

It belongs to the papillomaviridae E6 protein family. In terms of assembly, forms homodimers. Interacts with ubiquitin-protein ligase UBE3A/E6-AP; this interaction stimulates UBE3A ubiquitin activity. Interacts with host TP53 and EP300; this interaction inhibits TP53 activity.

Its subcellular location is the host cytoplasm. It is found in the host nucleus. In terms of biological role, plays a major role in the induction and maintenance of cellular transformation. E6 associates with host UBE3A/E6-AP ubiquitin-protein ligase and modulates its activity. Sequesters tumor suppressor TP53 in the host cytoplasm and modulates its activity by interacting with host EP300 that results in the reduction of TP53 acetylation and activation. In turn, apoptosis induced by DNA damage is inhibited. E6 also protects host keratinocytes from apoptosis by mediating the degradation of host BAK1. May also inhibit host immune response. This Homo sapiens (Human) protein is Protein E6.